Reading from the N-terminus, the 83-residue chain is Heterin-1 (83 aa).

Positions 1–22 are cleaved as a signal peptide; the sequence is MNGKLLLVSLMVTMLVMQPAEA. Residues 66–83 constitute a propeptide that is removed on maturation; that stretch reads VAGQIPFDEFMDILHYRP.

This sequence belongs to the non-disulfide-bridged peptide (NDBP) superfamily. Long chain multifunctional peptide (group 2) family. As to expression, expressed by the venom gland.

Its subcellular location is the secreted. It localises to the target cell membrane. Functionally, amphipathic peptide with potent activities against both Gram-positive and Gram-negative bacteria. Is the most active against the two Gram-positive Bacillus megaterium and Micrococcus luteus (MIC=4.0 uM for both). It has relatively low hemolytic activity against human erythrocytes. In Heterometrus spinifer (Asia giant forest scorpion), this protein is Heterin-1.